The primary structure comprises 23 residues: 48 kDa cell wall protein (23 aa).

Its subcellular location is the secreted. The protein resides in the cell wall. The sequence is that of 48 kDa cell wall protein from Nicotiana tabacum (Common tobacco).